The chain runs to 220 residues: Glutathione S-transferase U26 (220 aa).

The 80-residue stretch at 4-83 (DQVILLDYWP…YIDEVWSDAS (80 aa)) folds into the GST N-terminal domain. Residues 14–15 (SM), 40–41 (VK), 54–55 (KI), and 67–68 (ES) contribute to the glutathione site. The GST C-terminal domain maps to 89 to 210 (DPYQKSRARF…ADSDRIIEYV (122 aa)).

The protein belongs to the GST superfamily. Tau family.

It is found in the cytoplasm. It localises to the cytosol. The catalysed reaction is RX + glutathione = an S-substituted glutathione + a halide anion + H(+). In terms of biological role, in vitro, possesses glutathione S-transferase activity toward 1-chloro-2,4-dinitrobenzene (CDNB). May be involved in the conjugation of reduced glutathione to a wide number of exogenous and endogenous hydrophobic electrophiles and have a detoxification role against certain herbicides. This Arabidopsis thaliana (Mouse-ear cress) protein is Glutathione S-transferase U26 (GSTU26).